The following is a 162-amino-acid chain: MMNWRALSQTKQDRIWSEVNKIIKWKPGSRCHHIIPPDPYRVFDISSAMSSKAGHNDVSGVLSDLETSILKAFQLGTGKNDVMYALDWQHDGYTFSPHQAMPKDEFGEWPVPVFPNGDYYFFFHQDFSWGLLGDPWKCAITVFGEELLEAIDNDPPILFRNK.

This is an uncharacterized protein from Bacillus subtilis (strain 168).